The primary structure comprises 292 residues: Small ribosomal subunit biogenesis GTPase RsgA (292 aa).

A CP-type G domain is found at arginine 64–leucine 221. Residues asparagine 113–aspartate 116 and glycine 164–threonine 172 contribute to the GTP site. 4 residues coordinate Zn(2+): cysteine 245, cysteine 250, histidine 252, and cysteine 258.

It belongs to the TRAFAC class YlqF/YawG GTPase family. RsgA subfamily. As to quaternary structure, monomer. Associates with 30S ribosomal subunit, binds 16S rRNA. Zn(2+) serves as cofactor.

The protein localises to the cytoplasm. One of several proteins that assist in the late maturation steps of the functional core of the 30S ribosomal subunit. Helps release RbfA from mature subunits. May play a role in the assembly of ribosomal proteins into the subunit. Circularly permuted GTPase that catalyzes slow GTP hydrolysis, GTPase activity is stimulated by the 30S ribosomal subunit. The polypeptide is Small ribosomal subunit biogenesis GTPase RsgA (Clostridium botulinum (strain 657 / Type Ba4)).